The following is a 1087-amino-acid chain: Exportin-7 (1087 aa).

Ala-2 carries the post-translational modification N-acetylalanine. The region spanning Ala-30–Thr-96 is the Importin N-terminal domain. Ser-570 is modified (phosphoserine).

It belongs to the exportin family. As to quaternary structure, binds to nucleoporins. Found in a complex with XPO7, EIF4A1, ARHGAP1, VPS26A, VPS29, VPS35 and SFN. Interacts with ARHGAP1 and SFN. Interacts with Ran and cargo proteins in a GTP-dependent manner.

The protein resides in the cytoplasm. The protein localises to the nucleus. It localises to the nuclear pore complex. Its function is as follows. Mediates the nuclear export of proteins (cargos) with broad substrate specificity. In the nucleus binds cooperatively to its cargo and to the GTPase Ran in its active GTP-bound form. Docking of this trimeric complex to the nuclear pore complex (NPC) is mediated through binding to nucleoporins. Upon transit of a nuclear export complex into the cytoplasm, disassembling of the complex and hydrolysis of Ran-GTP to Ran-GDP (induced by RANBP1 and RANGAP1, respectively) cause release of the cargo from the export receptor. XPO7 then return to the nuclear compartment and mediate another round of transport. The directionality of nuclear export is thought to be conferred by an asymmetric distribution of the GTP- and GDP-bound forms of Ran between the cytoplasm and nucleus. This is Exportin-7 (XPO7) from Pongo abelii (Sumatran orangutan).